Consider the following 146-residue polypeptide: Oleosin (146 aa).

Position 2 is an N-acetylalanine (Ala2). Helical transmembrane passes span 22-42 (ILGF…TGLT), 56-76 (VLIF…VAVA), and 77-97 (GFLS…WLYN). A Proline-knot motif is present at residues 55–66 (PVLIFFSPILIP).

It belongs to the oleosin family. In terms of tissue distribution, expressed in pollen (at protein level).

The protein localises to the lipid droplet. The protein resides in the membrane. The sequence is that of Oleosin from Pinus elliottii (Slash pine).